The primary structure comprises 122 residues: Large ribosomal subunit protein uL14 (122 aa).

This sequence belongs to the universal ribosomal protein uL14 family. Part of the 50S ribosomal subunit. Forms a cluster with proteins L3 and L19. In the 70S ribosome, L14 and L19 interact and together make contacts with the 16S rRNA in bridges B5 and B8.

Binds to 23S rRNA. Forms part of two intersubunit bridges in the 70S ribosome. The sequence is that of Large ribosomal subunit protein uL14 from Variovorax paradoxus (strain S110).